A 91-amino-acid chain; its full sequence is Small ribosomal subunit protein bS18 (91 aa).

Belongs to the bacterial ribosomal protein bS18 family. In terms of assembly, part of the 30S ribosomal subunit. Forms a tight heterodimer with protein bS6.

In terms of biological role, binds as a heterodimer with protein bS6 to the central domain of the 16S rRNA, where it helps stabilize the platform of the 30S subunit. In Gluconacetobacter diazotrophicus (strain ATCC 49037 / DSM 5601 / CCUG 37298 / CIP 103539 / LMG 7603 / PAl5), this protein is Small ribosomal subunit protein bS18.